The following is a 263-amino-acid chain: Ribonuclease HII (263 aa).

Positions Ala39 to Ala257 constitute an RNase H type-2 domain. Residues Asp45, Glu46, and Asp157 each coordinate a divalent metal cation.

Belongs to the RNase HII family. Requires Mn(2+) as cofactor. It depends on Mg(2+) as a cofactor.

It is found in the cytoplasm. The catalysed reaction is Endonucleolytic cleavage to 5'-phosphomonoester.. Functionally, endonuclease that specifically degrades the RNA of RNA-DNA hybrids. The polypeptide is Ribonuclease HII (Oleidesulfovibrio alaskensis (strain ATCC BAA-1058 / DSM 17464 / G20) (Desulfovibrio alaskensis)).